The chain runs to 251 residues: MWRLLSGARAPVLRATLSDSWAAPPARAGLKTLLPVPTFEDVSIPEKPKLRFVERAPLVPKVRREPKNLRDIRGPSTEATEFTEGNFAILALGGGYLHWGHFEMMRLTINRFMDPKNMFALWRVPAPFKAITRKGMGQRMGGGKGAIDHYVTPVKAGRLIVEVGGRCEFQEVQGILNQVAHKLPFPAKAVSRETLEKIQKDQEERERNNQNPWTFERIATANMLGIRKVLSPYDLTHRGRYWGKFYMPERV.

A mitochondrion-targeting transit peptide spans 1 to 29 (MWRLLSGARAPVLRATLSDSWAAPPARAG).

The protein belongs to the universal ribosomal protein uL16 family. Component of the mitochondrial ribosome large subunit (39S) which comprises a 16S rRNA and about 50 distinct proteins.

The protein resides in the mitochondrion. The polypeptide is Large ribosomal subunit protein uL16m (MRPL16) (Bos taurus (Bovine)).